We begin with the raw amino-acid sequence, 311 residues long: Olfactory receptor 8B8 (311 aa).

The Extracellular segment spans residues methionine 1–isoleucine 25. A glycan (N-linked (GlcNAc...) asparagine) is linked at asparagine 5. A helical membrane pass occupies residues proline 26–isoleucine 46. At threonine 47–histidine 54 the chain is on the cytoplasmic side. A helical transmembrane segment spans residues leucine 55–serine 75. At valine 76–threonine 99 the chain is on the extracellular side. A disulfide bond links cysteine 97 and cysteine 189. A helical membrane pass occupies residues glutamine 100–tyrosine 120. The Cytoplasmic segment spans residues aspartate 121–glutamine 139. Residues valine 140 to threonine 160 form a helical membrane-spanning segment. Over alanine 161–leucine 197 the chain is Extracellular. The helical transmembrane segment at valine 198–serine 217 threads the bilayer. Residues tyrosine 218 to alanine 237 lie on the Cytoplasmic side of the membrane. Residues phenylalanine 238–methionine 258 form a helical membrane-spanning segment. Residues tyrosine 259–glycine 271 are Extracellular-facing. A helical transmembrane segment spans residues lysine 272–leucine 292. Over arginine 293–serine 311 the chain is Cytoplasmic.

The protein belongs to the G-protein coupled receptor 1 family. In terms of tissue distribution, expressed in the tongue and testis.

The protein resides in the cell membrane. In terms of biological role, odorant receptor (Potential). May be involved in taste perception. The polypeptide is Olfactory receptor 8B8 (Homo sapiens (Human)).